A 1035-amino-acid chain; its full sequence is Cell-division control histidine kinase PdhS (1035 aa).

Residues 1-613 (MSGSYPFIDI…HADGSEEPVD (613 aa)) form an important for polar localization region. The interval 500–533 (QGLANTRAESETPVSETSSIEPVEPTPPVKTRSE) is disordered. An interaction with DivK region spans residues 614–1035 (AHLNAIAWRG…VFPPTRVLAD (422 aa)). Positions 659–730 (HVEELKTILD…YLHGLSGNGV (72 aa)) constitute a PAS domain. A Histidine kinase domain is found at 802 to 1031 (RISHEIRTPL…VVEIVFPPTR (230 aa)). Histidine 805 carries the post-translational modification Phosphohistidine; by autocatalysis.

As to quaternary structure, interacts with DivK.

It is found in the cytoplasm. The enzyme catalyses ATP + protein L-histidine = ADP + protein N-phospho-L-histidine.. Functions as a polar differentiation marker. Essential protein that, by localizing in the old pole of dividing cells, controls cell division and maturation, probably through control of DivK phosphorylation status and cellular distribution, which in turn regulates CtrA, a transcriptional regulator of the minB operon. The asymmetrical localization of this protein is probably required for cells to enter a new division cycle. In Brucella ovis (strain ATCC 25840 / 63/290 / NCTC 10512), this protein is Cell-division control histidine kinase PdhS (pdhS).